A 300-amino-acid chain; its full sequence is Arginine/serine-rich protein 1 (300 aa).

A disordered region spans residues 1–142 (MSSAAVSKYV…RGRSHHRRSY (142 aa)). Ser-17 is subject to Phosphoserine. Residues 23-36 (SPSTSGSGRSSRLS) are compositionally biased toward low complexity. Positions 37–104 (SRSRSRSSSR…RSRSRSRGHR (68 aa)) are enriched in basic residues. Residues 105–115 (YYRDSRYEQPR) show a composition bias toward basic and acidic residues. Positions 116–125 (RYYQSPSPYR) are enriched in low complexity. 2 positions are modified to phosphoserine: Ser-120 and Ser-122. The span at 126–141 (SRSRSRSRGRSHHRRS) shows a compositional bias: basic residues. Arg-147 bears the Omega-N-methylarginine mark. The segment at 222-300 (QGAVSCSGPK…KSPYGLWIPV (79 aa)) is disordered. The segment covering 268–277 (PLEKTTKAAV) has biased composition (basic and acidic residues). Ser-284 carries the phosphoserine modification.

It belongs to the RSRP family. Post-translationally, phosphorylated. Phosphorylation at Ser-120 and Ser-122 mediates the interaction with spliceosome proteins.

The protein localises to the nucleus. Functionally, probably acts as a spliceosomal factor that contributes to spliceosome assembly and regulates the isoform switching of proteins such as PARP6. The polypeptide is Arginine/serine-rich protein 1 (Rsrp1) (Rattus norvegicus (Rat)).